We begin with the raw amino-acid sequence, 148 residues long: FAD synthase (148 aa).

Residues 5 to 6 (TF), 10 to 13 (HPGH), Asp-92, and Tyr-119 contribute to the ATP site.

The protein belongs to the archaeal FAD synthase family. In terms of assembly, homodimer. The cofactor is a divalent metal cation.

It catalyses the reaction FMN + ATP + H(+) = FAD + diphosphate. It functions in the pathway cofactor biosynthesis; FAD biosynthesis; FAD from FMN: step 1/1. Its function is as follows. Catalyzes the transfer of the AMP portion of ATP to flavin mononucleotide (FMN) to produce flavin adenine dinucleotide (FAD) coenzyme. This is FAD synthase from Methanosphaera stadtmanae (strain ATCC 43021 / DSM 3091 / JCM 11832 / MCB-3).